A 494-amino-acid polypeptide reads, in one-letter code: DDB1- and CUL4-associated factor 4 (494 aa).

The disordered stretch occupies residues 1 to 65 (MHQSSWKSRR…AGSSSVPDLP (65 aa)). Basic residues predominate over residues 7–20 (KSRRHRRRGHRHSA). The span at 51-60 (STSSTAGSSS) shows a compositional bias: low complexity. WD repeat units follow at residues 367 to 406 (FHDS…CIRQ) and 409 to 450 (GHVN…LLRT).

Interacts with DDB1 and CUL4A.

It participates in protein modification; protein ubiquitination. May function as a substrate receptor for CUL4-DDB1 E3 ubiquitin-protein ligase complex. The sequence is that of DDB1- and CUL4-associated factor 4 (DCAF4) from Bos taurus (Bovine).